Reading from the N-terminus, the 920-residue chain is Rho guanine nucleotide exchange factor 1 (920 aa).

Positions 39–230 (DQNSQFQSLE…SLYMRHLGVR (192 aa)) constitute an RGSL domain. The interval 231-404 (TKSGDKKSGR…PGWRELVPPD (174 aa)) is disordered. Residues 281–311 (DCRHLKVEADAEKPGPADRKGGLGMSSRDRT) show a composition bias toward basic and acidic residues. Residues 364-380 (STEDNGETESPEPGDDG) are compositionally biased toward acidic residues. Phosphoserine occurs at positions 373, 386, 390, 408, and 412. The DH domain occupies 415–604 (KRQEVISELL…REILHHVNQA (190 aa)). Phosphothreonine is present on residues R432 and T694. Residues 646 to 759 (KLVHEGPLTW…WCNLITETAG (114 aa)) enclose the PH domain. Y737 carries the post-translational modification Phosphotyrosine; by JAK2. Disordered stretches follow at residues 764-797 (PAPA…AEMA) and 840-864 (TEED…PGPV). Residues 865-894 (HTQEIEENLLSLEVAIRQLEELEEEFCRLR) adopt a coiled-coil conformation. At S905 the chain carries Phosphoserine.

As to quaternary structure, interacts with RHOA, GNA12 and GNA13. Homooligomerizes through the coiled coil region. Interacts with CTNNAL1. May interact with CCPG1. Phosphorylated by PKCA. Angiotensin-2 induced Tyr-737 phosphorylation is mediated by JAK2. Isoform 5 is phosphorylated at 'Ser-390'. In terms of tissue distribution, ubiquitously expressed.

Its subcellular location is the cytoplasm. The protein resides in the membrane. In terms of biological role, seems to play a role in the regulation of RhoA GTPase by guanine nucleotide-binding alpha-12 (GNA12) and alpha-13 (GNA13) subunits. Acts as a GTPase-activating protein (GAP) for GNA12 and GNA13, and as guanine nucleotide exchange factor (GEF) for RhoA GTPase. Activated G alpha 13/GNA13 stimulates the RhoGEF activity through interaction with the RGS-like domain. This GEF activity is inhibited by binding to activated GNA12. Mediates angiotensin-2-induced RhoA activation. Isoform 3 and isoform 4 do not homooligomerize and show an enhanced RhoGEF activity. In lymphoid follicles, may trigger activation of GNA13 as part of S1PR2-dependent signaling pathway that leads to inhibition of germinal center (GC) B cell growth and migration outside the GC niche. The protein is Rho guanine nucleotide exchange factor 1 (Arhgef1) of Mus musculus (Mouse).